The following is a 573-amino-acid chain: Sulfite reductase [NADPH] hemoprotein beta-component (573 aa).

Cys-438, Cys-444, Cys-483, and Cys-487 together coordinate [4Fe-4S] cluster. Cys-487 lines the siroheme pocket.

It belongs to the nitrite and sulfite reductase 4Fe-4S domain family. In terms of assembly, alpha(8)-beta(8). The alpha component is a flavoprotein, the beta component is a hemoprotein. Siroheme is required as a cofactor. Requires [4Fe-4S] cluster as cofactor.

It catalyses the reaction hydrogen sulfide + 3 NADP(+) + 3 H2O = sulfite + 3 NADPH + 4 H(+). Its pathway is sulfur metabolism; hydrogen sulfide biosynthesis; hydrogen sulfide from sulfite (NADPH route): step 1/1. Its function is as follows. Component of the sulfite reductase complex that catalyzes the 6-electron reduction of sulfite to sulfide. This is one of several activities required for the biosynthesis of L-cysteine from sulfate. This is Sulfite reductase [NADPH] hemoprotein beta-component from Nitrosomonas eutropha (strain DSM 101675 / C91 / Nm57).